Here is a 1719-residue protein sequence, read N- to C-terminus: MSGEVRLRQLEQFILDGPAQTNGQCFSVETLLDILICLYDECNNSPLRREKNILEYLEWAKPFTSKVKQMRLHREDFEILKVIGRGAFGEVAVVKLKNADKVFAMKILNKWEMLKRAETACFREERDVLVNGDSKWITTLHYAFQDDNNLYLVMDYYVGGDLLTLLSKFEDRLPEEMARFYLAEMVIAIDSVHQLHYVHRDIKPDNILMDMNGHIRLADFGSCLKLMEDGTVQSSVAVGTPDYISPEILQAMEDGKGRYGPECDWWSLGVCMYEMLYGETPFYAESLVETYGKIMNHKERFQFPAQVTDVSENAKDLIRRLICSREHRLGQNGIEDFKKHPFFSGIDWDNIRNCEAPYIPEVSSPTDTSNFDVDDDCLKNSETMPPPTHTAFSGHHLPFVGFTYTSSCVLSDRSCLRVTAGPTSLDLDVSVQRTLDNNLATEAYERRIKRLEQEKLELTRKLQESTQTVQALQYSTVDGPLTASKDLEIKSLKEEIEKLRKQVAEVNHLEQQLEEANSVRRELDDAFRQIKASEKQIKTLQQEREELNKELVQASERLKNQSKELKDAHCQRKLAMQEFMEINERLTELHTQKQKLARHVRDKEEEVDLVMQKAESLRQELRRAERAKKELEVHTEALIAEASKDKKLREQSEHYSKQLENELEGLKQKQISYSPGICSIEHQQEITKLKTDLEKKSIFYEEEISKREGIHASEIKNLKKELHDSEGQQLALNKEILVLKDKLEKTRRESQSEREEFENEFKQQYEREKVLLTEENKKLTSELDKLTSLYESLSLRNQHLEEEVKDLADKKESVAHWEAQITEIIQWVSDEKDARGYLQALASKMTEELEALRNSSLGTRATDMPWKMRRFAKLDMSARLELQSALDAEIRAKQAIQEELNKVKASNILTECKLKDSEKKNLELLSEIEQLIKDTEELRSEKGIEHQDSQHSFLAFLNTPTDALDQFEIADCAPLPAHTPTLRKKGCPASTGFPPKRKTHQFFVKSFTAPTKCHQCTSLMVGLIRQGCSCEVCGFSCHITCVNKAPTVCPVPPEQTKGPLGIDPQKGVGTAYEGHVRIPKPAGVKKGWQRALAVVCDFKLFLYDIAEGKASQPTSVISQVIDMRDEEFSVSSVLASDVIHASRKDIPCIFRVTASQLSAPSNKCSILMLADSENERSKWVGVLSELHKILKKNKFRDRSVYVPKEAYDSTLPLIKTTQAAAIIDHERIALGNEEGLFVVHVTKDEIVRVGDNKKIHQIELIPSDQLVAVISGRNRHVRLFPMSALDGRETDFYKLAETKGCQTIAAGKVRHGALSCLCVAMKRQVLCYELFQSKTRHRKFKEIQVPCNVQWMAIFSEHLCVGFQSGFLRYPLNGEGGPCNMLHSNDHTLSFISHQPMDALCAVEISNKEYLLCFNSIGIYTDCQGRRSRQQELMWPANPSSCCYNAPYLSVYSENAVDIFDVNSMEWIQTLPLKKVRPLNTEGSLNLLGLETIRLIYFKNKMAEGDELVVPETSDNSRKQMVRNINNKRRYSFRVPEEERMQQRREMLRDPEMRNKLISNPTNFNHIAHMGPGDGIQILKDLPMNPRPQESRTVFSGSVSIPSITKSRPEPGRSMSASSGLSARSSAQNGSALKREFSGGSYNTKRQPMPSPSEGSLSSGGMDQGSDAPARDYDGEDSDSPRHSTASNSSNLSSPPSPISPQKTKSLSLESTDRGSWDP.

Residues 77 to 343 enclose the Protein kinase domain; that stretch reads FEILKVIGRG…IEDFKKHPFF (267 aa). Residues 83–91 and lysine 106 each bind ATP; that span reads IGRGAFGEV. The active-site Proton acceptor is the aspartate 201. 2 positions are modified to phosphoserine; by autocatalysis: serine 222 and serine 234. A Phosphothreonine; by autocatalysis modification is found at threonine 240. The 71-residue stretch at 344–414 folds into the AGC-kinase C-terminal domain; the sequence is SGIDWDNIRN…TSSCVLSDRS (71 aa). Coiled coils occupy residues 437–670, 713–820, and 880–943; these read NNLA…KQKQ, SEIK…WEAQ, and LELQ…SEKG. Residues 999-1049 form a Phorbol-ester/DAG-type zinc finger; it reads THQFFVKSFTAPTKCHQCTSLMVGLIRQGCSCEVCGFSCHITCVNKAPTVC. The region spanning 1069 to 1188 is the PH domain; sequence GTAYEGHVRI…WVGVLSELHK (120 aa). The CNH domain maps to 1214-1486; sequence IKTTQAAAII…RPLNTEGSLN (273 aa). Position 1532 is a phosphoserine (serine 1532). The region spanning 1558-1571 is the CRIB domain; the sequence is ISNPTNFNHIAHMG. Residues 1579–1719 form a disordered region; sequence LKDLPMNPRP…ESTDRGSWDP (141 aa). Positions 1591 to 1606 are enriched in polar residues; sequence SRTVFSGSVSIPSITK. Serine 1598, serine 1600, serine 1616, serine 1638, serine 1651, serine 1656, serine 1680, serine 1706, and serine 1708 each carry phosphoserine. The span at 1612–1627 shows a compositional bias: low complexity; the sequence is GRSMSASSGLSARSSA. The segment covering 1652–1661 has biased composition (low complexity); sequence PSEGSLSSGG.

The protein belongs to the protein kinase superfamily. AGC Ser/Thr protein kinase family. DMPK subfamily. In terms of assembly, homodimer and homotetramer via the coiled coil regions. Interacts tightly with GTP-bound but not GDP-bound CDC42. Forms a tripartite complex with MYO18A and LRP35A with the latter acting as an adapter connecting CDC42BPA and MYO18A. LRP35A binding results in activation of CDC42BPA by abolition of its negative autoregulation. Interacts with LURAP1. Interacts (via AGC-kinase C-terminal domain) with FAM89B/LRAP25 (via LRR repeat). Forms a tripartite complex with FAM89B/LRAP25 and LIMK1. Mg(2+) serves as cofactor. Proteolytically cleaved by caspases upon apoptosis induction. The cleavage at Asp-478 by CASP3 increases its kinase activity (in vitro).

The protein resides in the cytoplasm. It localises to the cell projection. Its subcellular location is the lamellipodium. It carries out the reaction L-seryl-[protein] + ATP = O-phospho-L-seryl-[protein] + ADP + H(+). The catalysed reaction is L-threonyl-[protein] + ATP = O-phospho-L-threonyl-[protein] + ADP + H(+). Maintained in an inactive, closed conformation by an interaction between the kinase domain and the negative autoregulatory C-terminal coiled-coil region. Agonist binding to the phorbol ester binding site disrupts this, releasing the kinase domain to allow N-terminus-mediated dimerization and kinase activation by transautophosphorylation. Inhibited by chelerythrine chloride. In terms of biological role, serine/threonine-protein kinase which is an important downstream effector of CDC42 and plays a role in the regulation of cytoskeleton reorganization and cell migration. Regulates actin cytoskeletal reorganization via phosphorylation of PPP1R12C and MYL9/MLC2. In concert with MYO18A and LRP35A, is involved in modulating lamellar actomyosin retrograde flow that is crucial to cell protrusion and migration. Phosphorylates: PPP1R12A and LIMK2. May play a role in TFRC-mediated iron uptake. In concert with FAM89B/LRAP25 mediates the targeting of LIMK1 to the lamellipodium resulting in its activation and subsequent phosphorylation of CFL1 which is important for lamellipodial F-actin regulation. Triggers the formation of an extrusion apical actin ring required for epithelial extrusion of apoptotic cells. The sequence is that of Serine/threonine-protein kinase MRCK alpha (Cdc42bpa) from Mus musculus (Mouse).